A 338-amino-acid chain; its full sequence is Ketol-acid reductoisomerase (NADP(+)) (338 aa).

Residues 1 to 181 (MQVYYDKDCD…GGGRTGIIET (181 aa)) enclose the KARI N-terminal Rossmann domain. Residues 24–27 (FGSQ), Arg-47, Ser-50, Ser-52, and 82–85 (DEFQ) contribute to the NADP(+) site. Residue His-107 is part of the active site. Residue Gly-133 participates in NADP(+) binding. The region spanning 182–327 (TFRDECETDL…RKLRAMMPWI (146 aa)) is the KARI C-terminal knotted domain. The Mg(2+) site is built by Asp-190, Glu-194, Glu-226, and Glu-230. Ser-251 contacts substrate.

This sequence belongs to the ketol-acid reductoisomerase family. Mg(2+) is required as a cofactor.

It catalyses the reaction (2R)-2,3-dihydroxy-3-methylbutanoate + NADP(+) = (2S)-2-acetolactate + NADPH + H(+). The enzyme catalyses (2R,3R)-2,3-dihydroxy-3-methylpentanoate + NADP(+) = (S)-2-ethyl-2-hydroxy-3-oxobutanoate + NADPH + H(+). The protein operates within amino-acid biosynthesis; L-isoleucine biosynthesis; L-isoleucine from 2-oxobutanoate: step 2/4. It functions in the pathway amino-acid biosynthesis; L-valine biosynthesis; L-valine from pyruvate: step 2/4. In terms of biological role, involved in the biosynthesis of branched-chain amino acids (BCAA). Catalyzes an alkyl-migration followed by a ketol-acid reduction of (S)-2-acetolactate (S2AL) to yield (R)-2,3-dihydroxy-isovalerate. In the isomerase reaction, S2AL is rearranged via a Mg-dependent methyl migration to produce 3-hydroxy-3-methyl-2-ketobutyrate (HMKB). In the reductase reaction, this 2-ketoacid undergoes a metal-dependent reduction by NADPH to yield (R)-2,3-dihydroxy-isovalerate. This Hydrogenovibrio crunogenus (strain DSM 25203 / XCL-2) (Thiomicrospira crunogena) protein is Ketol-acid reductoisomerase (NADP(+)).